We begin with the raw amino-acid sequence, 665 residues long: DNA ligase (665 aa).

NAD(+)-binding positions include 34–38 (DEEYD), 83–84 (SL), and Glu114. Lys116 functions as the N6-AMP-lysine intermediate in the catalytic mechanism. 4 residues coordinate NAD(+): Arg137, Glu171, Lys287, and Lys311. Residues Cys405, Cys408, Cys424, and Cys429 each contribute to the Zn(2+) site. One can recognise a BRCT domain in the interval 587 to 665 (KKSSKLAGLT…EDEFKKMIID (79 aa)).

It belongs to the NAD-dependent DNA ligase family. LigA subfamily. It depends on Mg(2+) as a cofactor. The cofactor is Mn(2+).

It carries out the reaction NAD(+) + (deoxyribonucleotide)n-3'-hydroxyl + 5'-phospho-(deoxyribonucleotide)m = (deoxyribonucleotide)n+m + AMP + beta-nicotinamide D-nucleotide.. In terms of biological role, DNA ligase that catalyzes the formation of phosphodiester linkages between 5'-phosphoryl and 3'-hydroxyl groups in double-stranded DNA using NAD as a coenzyme and as the energy source for the reaction. It is essential for DNA replication and repair of damaged DNA. This is DNA ligase from Thermosipho africanus (strain TCF52B).